The chain runs to 205 residues: FMN-dependent NADH:quinone oxidoreductase (205 aa).

FMN contacts are provided by residues S10, 16 to 18 (SHS), and 96 to 99 (MYNF).

The protein belongs to the azoreductase type 1 family. As to quaternary structure, homodimer. FMN is required as a cofactor.

It catalyses the reaction 2 a quinone + NADH + H(+) = 2 a 1,4-benzosemiquinone + NAD(+). The enzyme catalyses N,N-dimethyl-1,4-phenylenediamine + anthranilate + 2 NAD(+) = 2-(4-dimethylaminophenyl)diazenylbenzoate + 2 NADH + 2 H(+). Quinone reductase that provides resistance to thiol-specific stress caused by electrophilic quinones. In terms of biological role, also exhibits azoreductase activity. Catalyzes the reductive cleavage of the azo bond in aromatic azo compounds to the corresponding amines. The polypeptide is FMN-dependent NADH:quinone oxidoreductase (Nostoc punctiforme (strain ATCC 29133 / PCC 73102)).